The chain runs to 198 residues: Proteasome subunit beta type-2 (198 aa).

The protein belongs to the peptidase T1B family. In terms of assembly, the 26S proteasome consists of a 20S proteasome core and two 19S regulatory subunits. The 20S proteasome core is composed of 28 subunits that are arranged in four stacked rings, resulting in a barrel-shaped structure. The two end rings are each formed by seven alpha subunits, and the two central rings are each formed by seven beta subunits. The catalytic chamber with the active sites is on the inside of the barrel.

It is found in the cytoplasm. The protein resides in the nucleus. Its function is as follows. Non-catalytic component of the proteasome, a multicatalytic proteinase complex which is characterized by its ability to cleave peptides with Arg, Phe, Tyr, Leu, and Glu adjacent to the leaving group at neutral or slightly basic pH. The proteasome has an ATP-dependent proteolytic activity. The polypeptide is Proteasome subunit beta type-2 (psmB2) (Dictyostelium discoideum (Social amoeba)).